A 394-amino-acid chain; its full sequence is 8-amino-7-oxononanoate synthase (394 aa).

Arg21 lines the substrate pocket. 112 to 113 (GY) contacts pyridoxal 5'-phosphate. His137 provides a ligand contact to substrate. Pyridoxal 5'-phosphate is bound by residues Ser183, His211, and Thr239. Lys242 is subject to N6-(pyridoxal phosphate)lysine. Thr358 provides a ligand contact to substrate.

It belongs to the class-II pyridoxal-phosphate-dependent aminotransferase family. BioF subfamily. As to quaternary structure, homodimer. It depends on pyridoxal 5'-phosphate as a cofactor.

It catalyses the reaction 6-carboxyhexanoyl-[ACP] + L-alanine + H(+) = (8S)-8-amino-7-oxononanoate + holo-[ACP] + CO2. It participates in cofactor biosynthesis; biotin biosynthesis. Its function is as follows. Catalyzes the decarboxylative condensation of pimeloyl-[acyl-carrier protein] and L-alanine to produce 8-amino-7-oxononanoate (AON), [acyl-carrier protein], and carbon dioxide. This is 8-amino-7-oxononanoate synthase from Paraburkholderia xenovorans (strain LB400).